Reading from the N-terminus, the 126-residue chain is Prefoldin subunit beta (126 aa).

The protein belongs to the prefoldin subunit beta family. In terms of assembly, heterohexamer of two alpha and four beta subunits.

The protein resides in the cytoplasm. Molecular chaperone capable of stabilizing a range of proteins. Seems to fulfill an ATP-independent, HSP70-like function in archaeal de novo protein folding. The protein is Prefoldin subunit beta of Methanocella arvoryzae (strain DSM 22066 / NBRC 105507 / MRE50).